We begin with the raw amino-acid sequence, 731 residues long: MAAEEQPLLGRDRGSGQVHSGAAADQELCIDQAVVFIEDAIKYRSIYHRMDAGSLWLYRWYYSNVCQRVLGFIIFLILILAFVEVPSSFTKTADVRYRSQPWQPPCGLTETIEAFCLLAFLVDLSVKGYLVGQAQLQQNLWLLAYFMVLVVSVVDWIVSLSLACEEPLRMRRLLRPFFLLQNSSMMKKTLKCIRWSLPEMASVGLLLAIHLCLFTIIGMLLFTIGEKDEAQDQERLAYFRNLPEALTSLLVLLTTSNNPDVMIPAYTQNRAFALFFIVFTLIGSLFLMNLLTAIIYNQFRGYLMKSLQTSLFRRRLGARAAYEVLASRAGPAGTTPELVGVNPETFLPVLQKTQLNKTHKQAIMQKVQSYEGRPMLADEFQKLFDEVDKGLAKERPLKPQYQSPFLQTAQFIFSHHYFDYLGNLVALGNLLSICVFLVLDSDLLPGERDDFVLGILDYIFILYYLLELLFKVFALGLPGYLSYHSNVFDGLLTIILLVSEICTLAVYRLPHSGWKPEQYGPLSLWDMTRLMNTLIVFRFLRIIPNIKPMAEVANTILGLIPNLRAFGGILVVAYYVFAMIGINLFRGVIVPPGNSSLVPDNNSAVCGSFEQLGYWPNNFDDFAAALITLWNVMVVNNWQVILEAYKRYAGPWSMVYFVLWWLVSSVIWINLFLALLLENFLHRWDPQGHKQLLVGTKQMSVELMFRDILEEPKEEELMEKLHKHPHLHLCR.

Residues 1-68 (MAAEEQPLLG…RWYYSNVCQR (68 aa)) are Cytoplasmic-facing. The chain crosses the membrane as a helical span at residues 69–89 (VLGFIIFLILILAFVEVPSSF). At 90 to 111 (TKTADVRYRSQPWQPPCGLTET) the chain is on the extracellular side. The helical transmembrane segment at 112–132 (IEAFCLLAFLVDLSVKGYLVG) threads the bilayer. Over 133–139 (QAQLQQN) the chain is Cytoplasmic. A helical membrane pass occupies residues 140 to 160 (LWLLAYFMVLVVSVVDWIVSL). Over 161-167 (SLACEEP) the chain is Extracellular. The helical transmembrane segment at 168-188 (LRMRRLLRPFFLLQNSSMMKK) threads the bilayer. The tract at residues 187–191 (KKTLK) is interaction with phosphatidylinositol 3,5-bisphosphate. The Cytoplasmic segment spans residues 189–203 (TLKCIRWSLPEMASV). Residues 204–224 (GLLLAIHLCLFTIIGMLLFTI) form a helical membrane-spanning segment. Topologically, residues 225–238 (GEKDEAQDQERLAY) are extracellular. An intramembrane region (helical; Pore-forming) is located at residues 239 to 263 (FRNLPEALTSLLVLLTTSNNPDVMI). At 264 to 270 (PAYTQNR) the chain is on the extracellular side. A helical transmembrane segment spans residues 271–291 (AFALFFIVFTLIGSLFLMNLL). At 292-417 (TAIIYNQFRG…TAQFIFSHHY (126 aa)) the chain is on the cytoplasmic side. Residues 418 to 438 (FDYLGNLVALGNLLSICVFLV) form a helical membrane-spanning segment. Topologically, residues 439-449 (LDSDLLPGERD) are extracellular. A helical transmembrane segment spans residues 450-470 (DFVLGILDYIFILYYLLELLF). At 471–486 (KVFALGLPGYLSYHSN) the chain is on the cytoplasmic side. The chain crosses the membrane as a helical span at residues 487–507 (VFDGLLTIILLVSEICTLAVY). Residues 508-524 (RLPHSGWKPEQYGPLSL) lie on the Extracellular side of the membrane. Residues 525–542 (WDMTRLMNTLIVFRFLRI) form a helical membrane-spanning segment. The Cytoplasmic segment spans residues 543 to 564 (IPNIKPMAEVANTILGLIPNLR). A helical membrane pass occupies residues 565–585 (AFGGILVVAYYVFAMIGINLF). The Extracellular segment spans residues 586 to 618 (RGVIVPPGNSSLVPDNNSAVCGSFEQLGYWPNN). Asn-594 and Asn-601 each carry an N-linked (GlcNAc...) asparagine glycan. An intramembrane region (helical; Pore-forming) is located at residues 619–641 (FDDFAAALITLWNVMVVNNWQVI). Over 642–656 (LEAYKRYAGPWSMVY) the chain is Extracellular. Residues 657–677 (FVLWWLVSSVIWINLFLALLL) traverse the membrane as a helical segment. The Cytoplasmic segment spans residues 678–731 (ENFLHRWDPQGHKQLLVGTKQMSVELMFRDILEEPKEEELMEKLHKHPHLHLCR).

Belongs to the calcium channel alpha-1 subunit (TC 1.A.1.11) family. Two pore calcium channel subfamily. As to quaternary structure, homodimer. Interacts with LRRK2. Interacts with HAX1. Interacts with MTOR; the interaction is required for TPCN2 ATP sensitivity. Found in a complex with LSM12, TPCN1 and TPCN2. Interacts with LSM12. N-glycosylated. As to expression, widely expressed. Highly expressed in macrophages. Expressed in pigmented cells.

It is found in the late endosome membrane. It localises to the lysosome membrane. Its subcellular location is the melanosome membrane. It catalyses the reaction Ca(2+)(in) = Ca(2+)(out). The enzyme catalyses Na(+)(in) = Na(+)(out). Regulated by Mg(2+) ions, cytosolic Mg(2+) selectively inhibits outward current while lysosomal Mg(2+) modestly inhibits both the outward and inward currents. In the absence of Mg(2+), NAADP readily activates TPCN2, with properties similar to PI(3,5)P2. Na(+) current is inhibited by ATP in a MTORC-dependent manner. ATP sensitivity is independent of PI(3,5)P2. Both current elicited by PI(3,5)P2 as well as NAADP are inhibited by tetrandrine. Intracellular channel initially characterized as a non-selective Ca(2+)-permeable channel activated by NAADP (nicotinic acid adenine dinucleotide phosphate), it is also a highly-selective Na(+) channel activated directly by PI(3,5)P2 (phosphatidylinositol 3,5-bisphosphate). Localizes to the lysosomal and late endosome membranes where it regulates organellar membrane excitability, membrane trafficking, and pH homeostasis. Is associated with a plethora of physiological processes, including mTOR-dependent nutrient sensing, skin pigmentation and autophagy. Ion selectivity is not fixed but rather agonist-dependent and under defined ionic conditions, can be readily activated by both NAADP and PI(3,5)P2. As calcium channel, it increases the pH in the lysosomal lumen, as sodium channel, it promotes lysosomal exocytosis. Plays a crucial role in endolysosomal trafficking in the endolysosomal degradation pathway and is potentially involved in the homeostatic control of many macromolecules and cell metabolites. Also expressed in melanosomes of pigmented cells where mediates a Ca(2+) channel and/or PI(3,5)P2-activated melanosomal Na(+) channel to acidify pH and inhibit tyrosinase activity required for melanogenesis and pigmentation. Unlike the voltage-dependent TPCN1, TPCN2 is voltage independent and can be activated solely by PI(3,5)P2 binding. In contrast, PI(4,5)P2, PI(3,4)P2, PI(3)P and PI(5)P have no obvious effect on channel activation. Its function is as follows. (Microbial infection) During Ebola virus (EBOV) infection, controls the movement of endosomes containing virus particles and is required by EBOV to escape from the endosomal network into the cell cytoplasm. This is Two pore channel protein 2 from Mus musculus (Mouse).